The following is a 106-amino-acid chain: UPF0145 protein Daci_3728 (106 aa).

The protein belongs to the UPF0145 family.

The protein is UPF0145 protein Daci_3728 of Delftia acidovorans (strain DSM 14801 / SPH-1).